Here is a 237-residue protein sequence, read N- to C-terminus: Protein YIPF4 (237 aa).

At 1–106 the chain is on the cytoplasmic side; the sequence is MQFSPTNGDF…FNRQVVRDNP (106 aa). A helical membrane pass occupies residues 107-127; that stretch reads DFWGPLAVVLLFSMISIYGQF. Topologically, residues 128–131 are lumenal; it reads RVVS. The chain crosses the membrane as a helical span at residues 132-152; the sequence is WIITIWIFGSLTIFLLARVLG. Over 153–160 the chain is Cytoplasmic; that stretch reads GEVSYGQV. The helical transmembrane segment at 161–181 threads the bilayer; that stretch reads LGVIGYSLLPLIVIAPLLLVI. Over 182–188 the chain is Lumenal; the sequence is GGFEVVS. Residues 189 to 209 form a helical membrane-spanning segment; that stretch reads TLIKLFGVFWAAYSAASLLVG. At 210–216 the chain is on the cytoplasmic side; it reads DEFKTKK. A helical membrane pass occupies residues 217–237; it reads PLLIYPIFLLYIYFLSLYTGV.

It belongs to the YIP1 family.

Its subcellular location is the golgi apparatus. It is found in the cis-Golgi network membrane. Functionally, involved in the maintenance of the Golgi structure. This is Protein YIPF4 (yipf4) from Danio rerio (Zebrafish).